The primary structure comprises 118 residues: Large ribosomal subunit protein bL19 (118 aa).

This sequence belongs to the bacterial ribosomal protein bL19 family.

Functionally, this protein is located at the 30S-50S ribosomal subunit interface and may play a role in the structure and function of the aminoacyl-tRNA binding site. The polypeptide is Large ribosomal subunit protein bL19 (Geobacter metallireducens (strain ATCC 53774 / DSM 7210 / GS-15)).